The sequence spans 40 residues: Esterase-4 (40 aa).

This sequence belongs to the type-B carboxylesterase/lipase family.

The enzyme catalyses a carboxylic ester + H2O = an alcohol + a carboxylate + H(+). In Drosophila mojavensis (Fruit fly), this protein is Esterase-4 (Est-4).